The chain runs to 381 residues: Queuine tRNA-ribosyltransferase (381 aa).

Asp92 (proton acceptor) is an active-site residue. Substrate contacts are provided by residues 92–96 (DSGGF), Asp146, Gln190, and Gly217. Residues 248 to 254 (GVGRPED) form an RNA binding region. The active-site Nucleophile is Asp267. Positions 272–276 (TRNAR) are RNA binding; important for wobble base 34 recognition. Zn(2+)-binding residues include Cys305, Cys307, Cys310, and His337.

The protein belongs to the queuine tRNA-ribosyltransferase family. In terms of assembly, homodimer. Within each dimer, one monomer is responsible for RNA recognition and catalysis, while the other monomer binds to the replacement base PreQ1. Zn(2+) is required as a cofactor.

It catalyses the reaction 7-aminomethyl-7-carbaguanine + guanosine(34) in tRNA = 7-aminomethyl-7-carbaguanosine(34) in tRNA + guanine. It functions in the pathway tRNA modification; tRNA-queuosine biosynthesis. Catalyzes the base-exchange of a guanine (G) residue with the queuine precursor 7-aminomethyl-7-deazaguanine (PreQ1) at position 34 (anticodon wobble position) in tRNAs with GU(N) anticodons (tRNA-Asp, -Asn, -His and -Tyr). Catalysis occurs through a double-displacement mechanism. The nucleophile active site attacks the C1' of nucleotide 34 to detach the guanine base from the RNA, forming a covalent enzyme-RNA intermediate. The proton acceptor active site deprotonates the incoming PreQ1, allowing a nucleophilic attack on the C1' of the ribose to form the product. After dissociation, two additional enzymatic reactions on the tRNA convert PreQ1 to queuine (Q), resulting in the hypermodified nucleoside queuosine (7-(((4,5-cis-dihydroxy-2-cyclopenten-1-yl)amino)methyl)-7-deazaguanosine). The chain is Queuine tRNA-ribosyltransferase from Xanthomonas campestris pv. campestris (strain B100).